The following is a 102-amino-acid chain: MFAVIKTGGKQYRVEEGQTLKVEKLAVEEGGAIQFDDVLLVCNGDDVKVGAPVVEGAKVTAEVVAHGRGDKVKILKFRRRKHSMKRMGHRQWFTEVKITGIN.

This sequence belongs to the bacterial ribosomal protein bL21 family. In terms of assembly, part of the 50S ribosomal subunit. Contacts protein L20.

Functionally, this protein binds to 23S rRNA in the presence of protein L20. The protein is Large ribosomal subunit protein bL21 of Marinomonas sp. (strain MWYL1).